The following is a 206-amino-acid chain: Large ribosomal subunit protein bL25 (206 aa).

This sequence belongs to the bacterial ribosomal protein bL25 family. CTC subfamily. As to quaternary structure, part of the 50S ribosomal subunit; part of the 5S rRNA/L5/L18/L25 subcomplex. Contacts the 5S rRNA. Binds to the 5S rRNA independently of L5 and L18.

This is one of the proteins that binds to the 5S RNA in the ribosome where it forms part of the central protuberance. This is Large ribosomal subunit protein bL25 from Paraburkholderia phytofirmans (strain DSM 17436 / LMG 22146 / PsJN) (Burkholderia phytofirmans).